The primary structure comprises 272 residues: NADPH-dependent 7-cyano-7-deazaguanine reductase (272 aa).

Position 80–82 (80–82) interacts with substrate; it reads VES. 82 to 83 is an NADPH binding site; sequence SK. C178 acts as the Thioimide intermediate in catalysis. The active-site Proton donor is the D185. Position 217–218 (217–218) interacts with substrate; sequence AE. 246–247 lines the NADPH pocket; it reads RG.

The protein belongs to the GTP cyclohydrolase I family. QueF type 2 subfamily. In terms of assembly, homodimer.

It localises to the cytoplasm. The enzyme catalyses 7-aminomethyl-7-carbaguanine + 2 NADP(+) = 7-cyano-7-deazaguanine + 2 NADPH + 3 H(+). Its pathway is tRNA modification; tRNA-queuosine biosynthesis. Functionally, catalyzes the NADPH-dependent reduction of 7-cyano-7-deazaguanine (preQ0) to 7-aminomethyl-7-deazaguanine (preQ1). The polypeptide is NADPH-dependent 7-cyano-7-deazaguanine reductase (Rickettsia typhi (strain ATCC VR-144 / Wilmington)).